Consider the following 40-residue polypeptide: uncharacterized protein (40 aa).

This is an uncharacterized protein from Dictyostelium discoideum (Social amoeba).